The following is a 520-amino-acid chain: Glutamate decarboxylase-like protein FG08083 (520 aa).

Substrate is bound at residue Lys-86–Val-88. Lys-300 carries the post-translational modification N6-(pyridoxal phosphate)lysine. The interval Lys-338 to Trp-357 is disordered. Residues Gly-340–Gly-351 show a composition bias toward polar residues. Residue Arg-492 coordinates substrate.

The protein belongs to the group II decarboxylase family. Requires pyridoxal 5'-phosphate as cofactor.

Its pathway is mycotoxin biosynthesis. Functionally, glutamate decarboxylase-like protein; part of the gene cluster that mediates the biosynthesis of butenolide, a mycotoxin that shows antibiotic activity but does not seem to play a major role in the spread of head blight in wheat. Butenolide is derived from glutamic acid via a 4-acetamido-2-butenoic acid intermediate. The predicted function of the NADH:flavin oxidoreductase FG08077, the cytochrome P450 monooxygenase FG08079, the decarboxylase FG08083, and the putative acetyltransferase FG08082 are consistent with this pathway, however, the respective activities of the butelonide biosynthesis cluster enzymes have still to be experimentally determined. This is Glutamate decarboxylase-like protein FG08083 from Gibberella zeae (strain ATCC MYA-4620 / CBS 123657 / FGSC 9075 / NRRL 31084 / PH-1) (Wheat head blight fungus).